A 119-amino-acid polypeptide reads, in one-letter code: Flagellar transcriptional regulator FlhD (119 aa).

The protein belongs to the FlhD family. In terms of assembly, homodimer; disulfide-linked. Forms a heterohexamer composed of two FlhC and four FlhD subunits. Each FlhC binds a FlhD dimer, forming a heterotrimer, and a hexamer assembles by dimerization of two heterotrimers.

The protein localises to the cytoplasm. Functionally, functions in complex with FlhC as a master transcriptional regulator that regulates transcription of several flagellar and non-flagellar operons by binding to their promoter region. Activates expression of class 2 flagellar genes, including fliA, which is a flagellum-specific sigma factor that turns on the class 3 genes. Also regulates genes whose products function in a variety of physiological pathways. The polypeptide is Flagellar transcriptional regulator FlhD (Shigella dysenteriae serotype 1 (strain Sd197)).